The primary structure comprises 545 residues: uncharacterized protein (545 aa).

Composition is skewed to basic and acidic residues over residues 34–44 (PMNKQNEKLKT) and 53–63 (PRNDYSRRVSR). 3 disordered regions span residues 34–98 (PMNK…PESN), 269–296 (QNGTAGYSNSRKTSSPSYHKQSIPPQDS), and 415–444 (ERPQRKTEHVKTPEENLQTKNPTTMTSAPE). Over residues 69-78 (TDSSEQQITA) the composition is skewed to polar residues. The segment covering 415–428 (ERPQRKTEHVKTPE) has biased composition (basic and acidic residues). Over residues 429-441 (ENLQTKNPTTMTS) the composition is skewed to polar residues.

This is an uncharacterized protein from Mus musculus (Mouse).